Reading from the N-terminus, the 369-residue chain is S-adenosylmethionine:tRNA ribosyltransferase-isomerase (369 aa).

The protein belongs to the QueA family. In terms of assembly, monomer.

The protein resides in the cytoplasm. The enzyme catalyses 7-aminomethyl-7-carbaguanosine(34) in tRNA + S-adenosyl-L-methionine = epoxyqueuosine(34) in tRNA + adenine + L-methionine + 2 H(+). Its pathway is tRNA modification; tRNA-queuosine biosynthesis. Its function is as follows. Transfers and isomerizes the ribose moiety from AdoMet to the 7-aminomethyl group of 7-deazaguanine (preQ1-tRNA) to give epoxyqueuosine (oQ-tRNA). The polypeptide is S-adenosylmethionine:tRNA ribosyltransferase-isomerase (Acaryochloris marina (strain MBIC 11017)).